We begin with the raw amino-acid sequence, 66 residues long: Cell division protein FtsB (66 aa).

Residues 1-3 (MKM) are Cytoplasmic-facing. A helical membrane pass occupies residues 4-21 (LKIFLLFLLFWLQCSLWI). Residues 22–66 (GKNGILDYIKIYKKIIVQKKKNEDFQIRNNQLILEIERLNNAIKN) are Extracellular-facing. Residues 38–66 (VQKKKNEDFQIRNNQLILEIERLNNAIKN) are a coiled coil.

The protein belongs to the FtsB family.

It localises to the cell membrane. Functionally, essential cell division protein. May link together the upstream cell division proteins, which are predominantly cytoplasmic, with the downstream cell division proteins, which are predominantly extracellular. In Buchnera aphidicola subsp. Schizaphis graminum (strain Sg), this protein is Cell division protein FtsB.